We begin with the raw amino-acid sequence, 283 residues long: Pantothenate synthetase (283 aa).

An ATP-binding site is contributed by 30 to 37 (MGNLHAGH). Residue histidine 37 is the Proton donor of the active site. Glutamine 61 provides a ligand contact to (R)-pantoate. Glutamine 61 is a beta-alanine binding site. Position 149-152 (149-152 (GEKD)) interacts with ATP. Glutamine 155 provides a ligand contact to (R)-pantoate. ATP is bound by residues valine 178 and 186–189 (LSSR).

It belongs to the pantothenate synthetase family. As to quaternary structure, homodimer.

Its subcellular location is the cytoplasm. It carries out the reaction (R)-pantoate + beta-alanine + ATP = (R)-pantothenate + AMP + diphosphate + H(+). It functions in the pathway cofactor biosynthesis; (R)-pantothenate biosynthesis; (R)-pantothenate from (R)-pantoate and beta-alanine: step 1/1. In terms of biological role, catalyzes the condensation of pantoate with beta-alanine in an ATP-dependent reaction via a pantoyl-adenylate intermediate. The sequence is that of Pantothenate synthetase from Azotobacter vinelandii (strain DJ / ATCC BAA-1303).